Consider the following 342-residue polypeptide: tRNA N6-adenosine threonylcarbamoyltransferase (342 aa).

The Fe cation site is built by His114 and His118. Residues 136–140, Asp169, Gly182, Asp186, and Asn275 each bind substrate; that span reads LVSGG. Asp301 contacts Fe cation.

It belongs to the KAE1 / TsaD family. It depends on Fe(2+) as a cofactor.

The protein localises to the cytoplasm. The catalysed reaction is L-threonylcarbamoyladenylate + adenosine(37) in tRNA = N(6)-L-threonylcarbamoyladenosine(37) in tRNA + AMP + H(+). Its function is as follows. Required for the formation of a threonylcarbamoyl group on adenosine at position 37 (t(6)A37) in tRNAs that read codons beginning with adenine. Is involved in the transfer of the threonylcarbamoyl moiety of threonylcarbamoyl-AMP (TC-AMP) to the N6 group of A37, together with TsaE and TsaB. TsaD likely plays a direct catalytic role in this reaction. The polypeptide is tRNA N6-adenosine threonylcarbamoyltransferase (Streptococcus pyogenes serotype M2 (strain MGAS10270)).